The primary structure comprises 395 residues: Putative pyridoxal phosphate-dependent acyltransferase (395 aa).

110 to 111 is a binding site for pyridoxal 5'-phosphate; it reads GF. A substrate-binding site is contributed by H135. Pyridoxal 5'-phosphate is bound by residues S185, 210–213, and 240–243; these read DDAH and TLSK. K243 carries the post-translational modification N6-(pyridoxal phosphate)lysine. T357 lines the substrate pocket.

The protein belongs to the class-II pyridoxal-phosphate-dependent aminotransferase family. As to quaternary structure, homodimer. The cofactor is pyridoxal 5'-phosphate.

This chain is Putative pyridoxal phosphate-dependent acyltransferase, found in Staphylococcus aureus (strain MRSA252).